The sequence spans 404 residues: ATP phosphoribosyltransferase regulatory subunit (404 aa).

The protein belongs to the class-II aminoacyl-tRNA synthetase family. HisZ subfamily. As to quaternary structure, heteromultimer composed of HisG and HisZ subunits.

It localises to the cytoplasm. It participates in amino-acid biosynthesis; L-histidine biosynthesis; L-histidine from 5-phospho-alpha-D-ribose 1-diphosphate: step 1/9. Functionally, required for the first step of histidine biosynthesis. May allow the feedback regulation of ATP phosphoribosyltransferase activity by histidine. The protein is ATP phosphoribosyltransferase regulatory subunit of Trichormus variabilis (strain ATCC 29413 / PCC 7937) (Anabaena variabilis).